A 595-amino-acid polypeptide reads, in one-letter code: Sucrose transport protein SUT4 (595 aa).

Residues 1–61 (MDSAAGGGGL…PAARTTTTRK (61 aa)) are Cytoplasmic-facing. Residues 29 to 55 (SLNGGTPRGGSPKDPDATHQQGPPAAR) are disordered. Residues 62–82 (LVLACMVAAGVQFGWALQLSL) form a helical membrane-spanning segment. The Extracellular segment spans residues 83-97 (LTPYIQTLGIDHAMA). A helical membrane pass occupies residues 98-118 (SFIWLCGPITGFVVQPCVGVW). The Cytoplasmic segment spans residues 119–130 (SDKCRSKYGRRR). Residues 131–151 (PFILAGCLMICFAVTLIGFSA) form a helical membrane-spanning segment. Residues 152–173 (DLGYILGDTTEHCSTYKGSRFR) are Extracellular-facing. Residues 174–194 (AAIIFVLGFWMLDLANNTVQG) traverse the membrane as a helical segment. The Cytoplasmic segment spans residues 195-213 (PARALLADLSGPDQCNSAN). The helical transmembrane segment at 214–234 (AIFCTWMAVGNVLGFSSGASG) threads the bilayer. Topologically, residues 235 to 256 (NWHKWFPFLMTRACCEACSNLK) are extracellular. The chain crosses the membrane as a helical span at residues 257-277 (AAFLVAVVFLLFCMSVTLYFA). Over 278–365 (EEIPLEPTDA…LTSMRHLPPG (88 aa)) the chain is Cytoplasmic. The disordered stretch occupies residues 291-340 (SDSAPLLNGSRDDNNASNEPRNGALPNGHTDGSNVPANSNAEDSNSNREN). A compositionally biased stretch (polar residues) spans 320–334 (TDGSNVPANSNAEDS). Residues 366–386 (MYSVLLVMALTWLSWFPFFLF) traverse the membrane as a helical segment. Over 387–417 (DTDWMGREVYHGDPNGNLSERKAYDNGVREG) the chain is Extracellular. N-linked (GlcNAc...) asparagine glycosylation occurs at asparagine 403. The helical transmembrane segment at 418-438 (AFGLLLNSVVLGIGSFLVDPL) threads the bilayer. At 439-447 (CRLMGARLV) the chain is on the cytoplasmic side. A helical transmembrane segment spans residues 448–468 (WAISNFTVFICMLATAILSWI). The Extracellular portion of the chain corresponds to 469–491 (SFDLYSSKLHHIIGANKTVKNSA). N-linked (GlcNAc...) asparagine glycosylation is present at asparagine 484. The helical transmembrane segment at 492-512 (LIVFSLLGLPLSITYSVPFSV) threads the bilayer. Residues 513-525 (TAELTAGTGGGQG) lie on the Cytoplasmic side of the membrane. The helical transmembrane segment at 526–546 (LATGVLNLAIVVPQIVVSLGA) threads the bilayer. Residues 547-556 (GPWDALFGGG) are Extracellular-facing. Residues 557–577 (NVPAFALASVFSLGAGVLAVL) form a helical membrane-spanning segment. The Cytoplasmic portion of the chain corresponds to 578–595 (KLPKLPNSYRSAGFHGFG).

It belongs to the glycoside-pentoside-hexuronide (GPH) cation symporter transporter (TC 2.A.2.4) family. In terms of assembly, homodimer.

It localises to the cell membrane. It participates in glycan biosynthesis; sucrose metabolism. Functionally, responsible for the transport of sucrose into the cell, with the concomitant uptake of protons (symport system). May also transport other glucosides. This chain is Sucrose transport protein SUT4 (SUT4), found in Oryza sativa subsp. indica (Rice).